A 248-amino-acid polypeptide reads, in one-letter code: Transmembrane protein 182 (248 aa).

Residues 1 to 26 (MKIHVAGFFAGLFGALATLFILLSFG) form the signal peptide. The Extracellular portion of the chain corresponds to 27 to 136 (TDYWLLASET…IIYRGFWSVS (110 aa)). N-linked (GlcNAc...) asparagine glycosylation is found at N66 and N119. A helical membrane pass occupies residues 137–157 (MLVGVAAVVAGGFIIICAAPF). The Cytoplasmic portion of the chain corresponds to 158–167 (ASHRLYKAGG). Residues 168 to 188 (GLYLISGFFVLVVTAMYVIWI) traverse the membrane as a helical segment. At 189–218 (DVLDVISLYTEYQKLNKCADFELNKTYGLS) the chain is on the extracellular side. A glycan (N-linked (GlcNAc...) asparagine) is linked at N212. A helical transmembrane segment spans residues 219-239 (FMFAPVGVFFCFLSGLLFLVI). The Cytoplasmic portion of the chain corresponds to 240-248 (GRTVHHQYN).

This sequence belongs to the TMEM182 family.

The protein localises to the cell membrane. Its function is as follows. May negatively regulate myogenesis and skeletal muscle regeneration. The protein is Transmembrane protein 182 (tmem182a) of Danio rerio (Zebrafish).